A 603-amino-acid polypeptide reads, in one-letter code: Elongation factor 4 (603 aa).

The region spanning 5 to 187 (RHIRNFCIIA…AVVNFVPPPK (183 aa)) is the tr-type G domain. Residues 17–22 (DHGKST) and 134–137 (NKID) each bind GTP.

Belongs to the TRAFAC class translation factor GTPase superfamily. Classic translation factor GTPase family. LepA subfamily.

Its subcellular location is the cell membrane. The enzyme catalyses GTP + H2O = GDP + phosphate + H(+). In terms of biological role, required for accurate and efficient protein synthesis under certain stress conditions. May act as a fidelity factor of the translation reaction, by catalyzing a one-codon backward translocation of tRNAs on improperly translocated ribosomes. Back-translocation proceeds from a post-translocation (POST) complex to a pre-translocation (PRE) complex, thus giving elongation factor G a second chance to translocate the tRNAs correctly. Binds to ribosomes in a GTP-dependent manner. The polypeptide is Elongation factor 4 (Symbiobacterium thermophilum (strain DSM 24528 / JCM 14929 / IAM 14863 / T)).